The following is a 445-amino-acid chain: Damage suppressor protein (445 aa).

Composition is skewed to polar residues over residues 1–15 (MAST…SSTG) and 25–47 (SQGS…SATS). Disordered stretches follow at residues 1–145 (MAST…HSVI) and 203–445 (YHSV…RKRK). A compositionally biased stretch (low complexity) spans 61 to 73 (SSTTAGSSSTQGQ). Residues 74-87 (KFSTTPTDPKTFSS) are compositionally biased toward polar residues. Residues 88–97 (DQKEKSKSPA) are compositionally biased toward basic and acidic residues. Positions 117–138 (DAKSSGQSQGQSKDSGKSSSDS) are enriched in low complexity. The span at 207–228 (VGDKTDDKKEGEHSGDKKDDSK) shows a compositional bias: basic and acidic residues. Residues 208-445 (GDKTDDKKEG…GGKAGGRKRK (238 aa)) are required and sufficient for DNA-binding and co-localization with nuclear DNA. The segment covering 245–256 (ETSGQAESSSGN) has biased composition (polar residues). Residues 257 to 306 (EGAAPAKGRGRGRPPAAAKGVAKGAAKGAAASKGAKSGAESSKGGEQSSG) are compositionally biased toward low complexity. Residues 329-338 (GEGGASGSEG) are compositionally biased toward gly residues. Residues 360–445 (EPPRRSSRLT…GGKAGGRKRK (86 aa)) are required for nucleosome binding and for the protection of chromatin from hydroxyl radical-mediated DNA damage. Residues 367 to 431 (RLTSSGTGAG…ASKAPQNGAG (65 aa)) are compositionally biased toward low complexity. Residues 432 to 445 (AKKKGGKAGGRKRK) show a composition bias toward basic residues.

Its subcellular location is the nucleus. In terms of biological role, unique chromatin-associating protein that contributes to the organism's exceptional tolerance to harsh environmental stresses. Binds with a higher affinity to nucleosomes than to free DNA. Protects chromatin from damage caused by hydroxyl radical-mediated cleavage induced by X-rays or treatment with hydrogen peroxide. Suppresses X-ray-induced DNA damage that includes single-strand breaks (SSBs) as well as more hazardous double-strand breaks (DSBs), and improves radiotolerance. Also shields DNA against reactive oxygen species (ROS). The protein is Damage suppressor protein of Ramazzottius varieornatus (Water bear).